A 63-amino-acid chain; its full sequence is Beta-defensin 3 (63 aa).

Residues 1–20 (MRIHYLLFSFLLVLLSPLSA) form the signal peptide. The propeptide occupies 21-22 (FS). Cystine bridges form between Cys31–Cys59, Cys38–Cys52, and Cys42–Cys60.

This sequence belongs to the beta-defensin family.

The protein resides in the secreted. Functionally, has bactericidal activity. This chain is Beta-defensin 3 (Defb3), found in Rattus norvegicus (Rat).